The sequence spans 344 residues: 4-dimethylallyltryptophan N-methyltransferase easF (344 aa).

It belongs to the methyltransferase superfamily. Homodimer.

The catalysed reaction is 4-(3-methylbut-2-enyl)-L-tryptophan + S-adenosyl-L-methionine = 4-(3-methylbut-2-enyl)-L-abrine + S-adenosyl-L-homocysteine + H(+). It functions in the pathway alkaloid biosynthesis; ergot alkaloid biosynthesis. 4-dimethylallyltryptophan N-methyltransferase; part of the gene cluster that mediates the biosynthesis of fungal ergot alkaloid. DmaW catalyzes the first step of ergot alkaloid biosynthesis by condensing dimethylallyl diphosphate (DMAP) and tryptophan to form 4-dimethylallyl-L-tryptophan. The second step is catalyzed by the methyltransferase easF that methylates 4-dimethylallyl-L-tryptophan in the presence of S-adenosyl-L-methionine, resulting in the formation of 4-dimethylallyl-L-abrine. The catalase easC and the FAD-dependent oxidoreductase easE then transform 4-dimethylallyl-L-abrine to chanoclavine-I which is further oxidized by easD in the presence of NAD(+), resulting in the formation of chanoclavine-I aldehyde. Agroclavine dehydrogenase easG then mediates the conversion of chanoclavine-I aldehyde to agroclavine via a non-enzymatic adduct reaction: the substrate is an iminium intermediate that is formed spontaneously from chanoclavine-I aldehyde in the presence of glutathione. The presence of easA is not required to complete this reaction. Further conversion of agroclavine to paspalic acid is a two-step process involving oxidation of agroclavine to elymoclavine and of elymoclavine to paspalic acid, the second step being performed by the elymoclavine oxidase cloA. Paspalic acid is then further converted to D-lysergic acid. Ergopeptines are assembled from D-lysergic acid and three different amino acids by the D-lysergyl-peptide-synthetases composed each of a monomudular and a trimodular nonribosomal peptide synthetase subunit. LpsB and lpsC encode the monomodular subunits responsible for D-lysergic acid activation and incorporation into the ergopeptine backbone. LpsA1 and A2 subunits encode the trimodular nonribosomal peptide synthetase assembling the tripeptide portion of ergopeptines. LpsA1 is responsible for formation of the major ergopeptine, ergotamine, and lpsA2 for alpha-ergocryptine, the minor ergopeptine of the total alkaloid mixture elaborated by C.purpurea. D-lysergyl-tripeptides are assembled by the nonribosomal peptide synthetases and released as N-(D-lysergyl-aminoacyl)-lactams. Cyclolization of the D-lysergyl-tripeptides is performed by the Fe(2+)/2-ketoglutarate-dependent dioxygenase easH which introduces a hydroxyl group into N-(D-lysergyl-aminoacyl)-lactam at alpha-C of the aminoacyl residue followed by spontaneous condensation with the terminal lactam carbonyl group. This is 4-dimethylallyltryptophan N-methyltransferase easF from Claviceps purpurea (strain 20.1) (Ergot fungus).